The following is a 318-amino-acid chain: ATP phosphoribosyltransferase regulatory subunit (318 aa).

This sequence belongs to the class-II aminoacyl-tRNA synthetase family. HisZ subfamily. In terms of assembly, heteromultimer composed of HisG and HisZ subunits.

The protein resides in the cytoplasm. Its pathway is amino-acid biosynthesis; L-histidine biosynthesis; L-histidine from 5-phospho-alpha-D-ribose 1-diphosphate: step 1/9. In terms of biological role, required for the first step of histidine biosynthesis. May allow the feedback regulation of ATP phosphoribosyltransferase activity by histidine. This is ATP phosphoribosyltransferase regulatory subunit from Lactococcus lactis subsp. cremoris (strain SK11).